The chain runs to 151 residues: Arginine regulator (151 aa).

Belongs to the ArgR family.

It localises to the cytoplasm. Its pathway is amino-acid degradation; L-arginine degradation via ADI pathway. Regulates the transcription of the arc operon, involved in arginine catabolism. This Clostridium perfringens (strain 13 / Type A) protein is Arginine regulator (argR1).